Here is a 558-residue protein sequence, read N- to C-terminus: Trehalase 1 (558 aa).

The protein belongs to the glycosyl hydrolase 15 family.

The enzyme catalyses alpha,alpha-trehalose + H2O = alpha-D-glucose + beta-D-glucose. It participates in glycan degradation; trehalose degradation; D-glucose from alpha,alpha-trehalose: step 1/1. Catalyzes the hydrolysis of alpha,alpha-trehalose into two molecules of D-glucose. The sequence is that of Trehalase 1 (treH1) from Sulfolobus acidocaldarius (strain ATCC 33909 / DSM 639 / JCM 8929 / NBRC 15157 / NCIMB 11770).